The primary structure comprises 83 residues: FILVVIALMVIEVKSDGYLMVRAGREKGCKVWCVINNTYCDKDCKLKGGSYGYCYFWKLACYCEGLPESSPDIWTYEKNTCST.

The N-terminal stretch at 1 to 15 (FILVVIALMVIEVKS) is a signal peptide. The LCN-type CS-alpha/beta domain occupies 16–82 (DGYLMVRAGR…IWTYEKNTCS (67 aa)). 4 cysteine pairs are disulfide-bonded: C29-C81, C33-C54, C40-C61, and C44-C63.

This sequence belongs to the long (4 C-C) scorpion toxin superfamily. Sodium channel inhibitor family. Beta subfamily. As to expression, expressed by the venom gland.

Its subcellular location is the secreted. Functionally, binds voltage-independently at site-4 of sodium channels (Nav) and shift the voltage of activation toward more negative potentials thereby affecting sodium channel activation and promoting spontaneous and repetitive firing. This is Neurotoxin LmNaTx34.5 from Lychas mucronatus (Chinese swimming scorpion).